Here is a 137-residue protein sequence, read N- to C-terminus: Small ribosomal subunit protein uS12 (137 aa).

Positions 1-57 are disordered; it reads MPTINQLVRKPRRAQVTKSKSPAMNVGYNSRKKVQTKLASPQKRGVATRVGTMTPKK. D102 bears the 3-methylthioaspartic acid mark.

Belongs to the universal ribosomal protein uS12 family. Part of the 30S ribosomal subunit. Contacts proteins S8 and S17. May interact with IF1 in the 30S initiation complex.

Functionally, with S4 and S5 plays an important role in translational accuracy. Interacts with and stabilizes bases of the 16S rRNA that are involved in tRNA selection in the A site and with the mRNA backbone. Located at the interface of the 30S and 50S subunits, it traverses the body of the 30S subunit contacting proteins on the other side and probably holding the rRNA structure together. The combined cluster of proteins S8, S12 and S17 appears to hold together the shoulder and platform of the 30S subunit. In Lactococcus lactis subsp. lactis (strain IL1403) (Streptococcus lactis), this protein is Small ribosomal subunit protein uS12.